A 439-amino-acid polypeptide reads, in one-letter code: ATP-dependent protease ATPase subunit HslU (439 aa).

ATP-binding positions include Ile17, 59 to 64 (GVGKTE), Asp251, Glu317, and Arg389.

The protein belongs to the ClpX chaperone family. HslU subfamily. In terms of assembly, a double ring-shaped homohexamer of HslV is capped on each side by a ring-shaped HslU homohexamer. The assembly of the HslU/HslV complex is dependent on binding of ATP.

It localises to the cytoplasm. Functionally, ATPase subunit of a proteasome-like degradation complex; this subunit has chaperone activity. The binding of ATP and its subsequent hydrolysis by HslU are essential for unfolding of protein substrates subsequently hydrolyzed by HslV. HslU recognizes the N-terminal part of its protein substrates and unfolds these before they are guided to HslV for hydrolysis. The chain is ATP-dependent protease ATPase subunit HslU from Campylobacter jejuni subsp. jejuni serotype O:23/36 (strain 81-176).